We begin with the raw amino-acid sequence, 363 residues long: 3-dehydroquinate synthase (363 aa).

NAD(+) is bound by residues 72-77 (SGEQSK), 106-110 (GVIGD), 130-131 (TT), lysine 142, and lysine 151. The Zn(2+) site is built by glutamate 184, histidine 246, and histidine 263.

This sequence belongs to the sugar phosphate cyclases superfamily. Dehydroquinate synthase family. Co(2+) serves as cofactor. It depends on Zn(2+) as a cofactor. The cofactor is NAD(+).

It localises to the cytoplasm. It carries out the reaction 7-phospho-2-dehydro-3-deoxy-D-arabino-heptonate = 3-dehydroquinate + phosphate. The protein operates within metabolic intermediate biosynthesis; chorismate biosynthesis; chorismate from D-erythrose 4-phosphate and phosphoenolpyruvate: step 2/7. Catalyzes the conversion of 3-deoxy-D-arabino-heptulosonate 7-phosphate (DAHP) to dehydroquinate (DHQ). This Bacillus pumilus (strain SAFR-032) protein is 3-dehydroquinate synthase.